The following is an 808-amino-acid chain: Phospholipase D alpha 1 (808 aa).

Residues 1–125 (MSKVLLHGTL…LDGDEVDKWI (125 aa)) enclose the C2 domain. Residue Asp-186 participates in Ca(2+) binding. Positions 326-364 (TMFTHHQKIVVVDHELPRGGSQKRRVMSFVGGIDLCDGR) constitute a PLD phosphodiesterase 1 domain. Catalysis depends on residues His-331, Lys-333, and Asp-338. A 1,2-diacyl-sn-glycero-3-phosphate is bound at residue His-331. Positions 370 and 404 each coordinate Ca(2+). Residues Gln-520 and His-659 each coordinate a 1,2-diacyl-sn-glycero-3-phosphate. One can recognise a PLD phosphodiesterase 2 domain in the interval 654–681 (FMIYVHSKMMIVDDEYIIVGSANINQRS). Active-site residues include His-659, Lys-661, and Asp-666. Ca(2+) is bound at residue Glu-720.

The protein belongs to the phospholipase D family. C2-PLD subfamily. Interacts (via C2 domain) with CARDA (via RGD or KGE motifs). It depends on Ca(2+) as a cofactor.

It carries out the reaction a 1,2-diacyl-sn-glycero-3-phosphocholine + H2O = a 1,2-diacyl-sn-glycero-3-phosphate + choline + H(+). Functionally, hydrolyzes glycerol-phospholipids at the terminal phosphodiesteric bond. Plays an important role in various cellular processes. In Cynara cardunculus (Cardoon), this protein is Phospholipase D alpha 1.